Consider the following 874-residue polypeptide: Alanine--tRNA ligase (874 aa).

Residues His-564, His-568, Cys-665, and His-669 each contribute to the Zn(2+) site.

The protein belongs to the class-II aminoacyl-tRNA synthetase family. Zn(2+) serves as cofactor.

It localises to the cytoplasm. It carries out the reaction tRNA(Ala) + L-alanine + ATP = L-alanyl-tRNA(Ala) + AMP + diphosphate. In terms of biological role, catalyzes the attachment of alanine to tRNA(Ala) in a two-step reaction: alanine is first activated by ATP to form Ala-AMP and then transferred to the acceptor end of tRNA(Ala). Also edits incorrectly charged Ser-tRNA(Ala) and Gly-tRNA(Ala) via its editing domain. The chain is Alanine--tRNA ligase from Burkholderia pseudomallei (strain 668).